Here is a 359-residue protein sequence, read N- to C-terminus: Histamine H2 receptor (359 aa).

The Extracellular portion of the chain corresponds to 1 to 22; it reads MAFNGTVPSFCMDFTVYKVTIS. N-linked (GlcNAc...) asparagine glycosylation occurs at Asn-4. A helical membrane pass occupies residues 23–44; that stretch reads VILIILILVTVAGNVVVCLAVG. Topologically, residues 45–57 are cytoplasmic; that stretch reads LNRRLRSLTNCFI. A helical membrane pass occupies residues 58-81; the sequence is VSLAVTDLLLGLLVLPFSAIYQLS. At 82–92 the chain is on the extracellular side; that stretch reads CKWSFSKVFCN. Cys-91 and Cys-174 form a disulfide bridge. A helical transmembrane segment spans residues 93 to 114; it reads IYTSLDVMLCTASILNLFMISL. Over 115-134 the chain is Cytoplasmic; it reads DRYCAVTDPLRYPVLITPAR. The chain crosses the membrane as a helical span at residues 135-159; the sequence is VAISLVFIWVISITLSFLSIHLGWN. The Extracellular portion of the chain corresponds to 160-180; it reads SRNETSKDNDTIVKCKVQVNE. A helical membrane pass occupies residues 181–204; sequence VYGLVDGLVTFYLPLLIMCITYFR. Residues 205–234 lie on the Cytoplasmic side of the membrane; the sequence is IFKIAREQARRINHIGSWKAATIREHKATV. The helical transmembrane segment at 235–258 threads the bilayer; it reads TLAAVMGAFIICWFPYFTVFVYRG. The Extracellular segment spans residues 259–267; it reads LKGDDAVNE. Residues 268–289 traverse the membrane as a helical segment; the sequence is VFEDVVLWLGYANSALNPILYA. Residues 290-359 are Cytoplasmic-facing; sequence ALNRDFRTAY…VTAPQGATNR (70 aa). Cys-305 is lipidated: S-palmitoyl cysteine.

Belongs to the G-protein coupled receptor 1 family.

It is found in the cell membrane. Its function is as follows. The H2 subclass of histamine receptors mediates gastric acid secretion. The activity of this receptor is mediated by G proteins which activate adenylyl cyclase. This is Histamine H2 receptor (HRH2) from Cavia porcellus (Guinea pig).